Consider the following 197-residue polypeptide: Guanylate kinase (197 aa).

A Guanylate kinase-like domain is found at 9-188 (GRLVVFSAPS…AVEAVILAIS (180 aa)). 16 to 23 (APSGTGKS) contributes to the ATP binding site.

Belongs to the guanylate kinase family.

The protein resides in the cytoplasm. It carries out the reaction GMP + ATP = GDP + ADP. Essential for recycling GMP and indirectly, cGMP. The sequence is that of Guanylate kinase from Chlorobium luteolum (strain DSM 273 / BCRC 81028 / 2530) (Pelodictyon luteolum).